We begin with the raw amino-acid sequence, 123 residues long: Class I hydrophobin pri2 (123 aa).

The signal sequence occupies residues 1 to 18; that stretch reads MVAIKSLAILALPVMAMA. 4 cysteine pairs are disulfide-bonded: C31-C102, C38-C96, C39-C84, and C103-C116. 2 N-linked (GlcNAc...) asparagine glycosylation sites follow: N33 and N40.

This sequence belongs to the fungal hydrophobin family. Self-assembles to form functional amyloid fibrils called rodlets. Self-assembly into fibrillar rodlets occurs spontaneously at hydrophobic:hydrophilic interfaces and the rodlets further associate laterally to form amphipathic monolayers.

Its subcellular location is the secreted. The protein resides in the cell wall. Its function is as follows. Aerial growth, conidiation, and dispersal of filamentous fungi in the environment rely upon a capability of their secreting small amphipathic proteins called hydrophobins (HPBs) with low sequence identity. Class I can self-assemble into an outermost layer of rodlet bundles on aerial cell surfaces, conferring cellular hydrophobicity that supports fungal growth, development and dispersal; whereas Class II form highly ordered films at water-air interfaces through intermolecular interactions but contribute nothing to the rodlet structure. In Cyclocybe aegerita (Black poplar mushroom), this protein is Class I hydrophobin pri2.